The following is a 491-amino-acid chain: N-succinylglutamate 5-semialdehyde dehydrogenase (491 aa).

225-230 serves as a coordination point for NAD(+); that stretch reads GSSTVG. Residues E248 and C282 contribute to the active site.

Belongs to the aldehyde dehydrogenase family. AstD subfamily.

The enzyme catalyses N-succinyl-L-glutamate 5-semialdehyde + NAD(+) + H2O = N-succinyl-L-glutamate + NADH + 2 H(+). Its pathway is amino-acid degradation; L-arginine degradation via AST pathway; L-glutamate and succinate from L-arginine: step 4/5. In terms of biological role, catalyzes the NAD-dependent reduction of succinylglutamate semialdehyde into succinylglutamate. The sequence is that of N-succinylglutamate 5-semialdehyde dehydrogenase from Marinobacter nauticus (strain ATCC 700491 / DSM 11845 / VT8) (Marinobacter aquaeolei).